The following is a 158-amino-acid chain: Probable flavodoxin 1 (158 aa).

The 141-residue stretch at alanine 4–leucine 144 folds into the Flavodoxin-like domain.

Belongs to the flavodoxin family. FMN is required as a cofactor.

Its function is as follows. Low-potential electron donor to a number of redox enzymes. This Bacillus subtilis (strain 168) protein is Probable flavodoxin 1 (ykuN).